Consider the following 131-residue polypeptide: Small ribosomal subunit protein uS8 (131 aa).

Belongs to the universal ribosomal protein uS8 family. As to quaternary structure, part of the 30S ribosomal subunit. Contacts proteins S5 and S12.

Functionally, one of the primary rRNA binding proteins, it binds directly to 16S rRNA central domain where it helps coordinate assembly of the platform of the 30S subunit. This Helicobacter pylori (strain P12) protein is Small ribosomal subunit protein uS8.